Here is a 372-residue protein sequence, read N- to C-terminus: Heat shock 70 kDa protein II (372 aa).

Belongs to the heat shock protein 70 family.

The sequence is that of Heat shock 70 kDa protein II (HSP70II) from Paracentrotus lividus (Common sea urchin).